The primary structure comprises 110 residues: Quaternary ammonium compound-resistance protein QacE (110 aa).

The next 4 membrane-spanning stretches (helical) occupy residues 1–21, 30–50, 58–78, and 85–105; these read MKGWLFLVIAIVGEVIATSAL, LAPSAVVIIGYGIAFYFLSLV, VAYAVWSGLGVVIITAIAWLL, and AWGFVGMGLIVSGVVVLNLLS.

Belongs to the drug/metabolite transporter (DMT) superfamily. Small multidrug resistance (SMR) (TC 2.A.7.1) family.

The protein localises to the cell membrane. Functionally, multidrug exporter. Is implicated for the resistance to bacteriocidal quaternary ammonium compounds. The polypeptide is Quaternary ammonium compound-resistance protein QacE (qacE) (Escherichia coli).